The sequence spans 147 residues: Nucleoside diphosphate kinase (147 aa).

6 residues coordinate ATP: K9, F57, R85, T91, R102, and N112. The active-site Pros-phosphohistidine intermediate is H115.

Belongs to the NDK family. Homotetramer. It depends on Mg(2+) as a cofactor.

It is found in the cytoplasm. The catalysed reaction is a 2'-deoxyribonucleoside 5'-diphosphate + ATP = a 2'-deoxyribonucleoside 5'-triphosphate + ADP. It catalyses the reaction a ribonucleoside 5'-diphosphate + ATP = a ribonucleoside 5'-triphosphate + ADP. Major role in the synthesis of nucleoside triphosphates other than ATP. The ATP gamma phosphate is transferred to the NDP beta phosphate via a ping-pong mechanism, using a phosphorylated active-site intermediate. The protein is Nucleoside diphosphate kinase of Listeria welshimeri serovar 6b (strain ATCC 35897 / DSM 20650 / CCUG 15529 / CIP 8149 / NCTC 11857 / SLCC 5334 / V8).